The following is a 349-amino-acid chain: Phosphoribosylformylglycinamidine cyclo-ligase (349 aa).

The protein belongs to the AIR synthase family.

The protein resides in the cytoplasm. The enzyme catalyses 2-formamido-N(1)-(5-O-phospho-beta-D-ribosyl)acetamidine + ATP = 5-amino-1-(5-phospho-beta-D-ribosyl)imidazole + ADP + phosphate + H(+). It functions in the pathway purine metabolism; IMP biosynthesis via de novo pathway; 5-amino-1-(5-phospho-D-ribosyl)imidazole from N(2)-formyl-N(1)-(5-phospho-D-ribosyl)glycinamide: step 2/2. This Listeria monocytogenes serotype 4a (strain HCC23) protein is Phosphoribosylformylglycinamidine cyclo-ligase.